Reading from the N-terminus, the 33-residue chain is Cytochrome b6-f complex subunit 5 (33 aa).

The helical transmembrane segment at 5 to 25 (LLFGIILGLISCVLAGLFVSA) threads the bilayer.

The protein belongs to the PetG family. The 4 large subunits of the cytochrome b6-f complex are cytochrome b6, subunit IV (17 kDa polypeptide, PetD), cytochrome f and the Rieske protein, while the 4 small subunits are PetG, PetL, PetM and PetN. The complex functions as a dimer.

The protein resides in the plastid. It is found in the chloroplast thylakoid membrane. Its function is as follows. Component of the cytochrome b6-f complex, which mediates electron transfer between photosystem II (PSII) and photosystem I (PSI), cyclic electron flow around PSI, and state transitions. PetG is required for either the stability or assembly of the cytochrome b6-f complex. The sequence is that of Cytochrome b6-f complex subunit 5 from Bigelowiella natans (Pedinomonas minutissima).